Here is a 388-residue protein sequence, read N- to C-terminus: Pepsin A (388 aa).

Residues 1–15 (MKWLLLLGLVALSEC) form the signal peptide. Residues 16–62 (IIYKVPLVRKKSLRRNLSEHGLLKDFLKKHNRNPASKYFPQTEAPTL) constitute a propeptide, activation peptide. Positions 76 to 385 (YFGTIGIGTP…DRANNQVGLA (310 aa)) constitute a Peptidase A1 domain. The active site involves aspartate 94. Cysteine 107 and cysteine 112 form a disulfide bridge. Residue serine 130 is modified to Phosphoserine. Residues cysteine 268 and cysteine 272 are joined by a disulfide bond. The active site involves aspartate 277. Cysteine 311 and cysteine 344 are disulfide-bonded.

The protein belongs to the peptidase A1 family.

Its subcellular location is the secreted. The enzyme catalyses Preferential cleavage: hydrophobic, preferably aromatic, residues in P1 and P1' positions. Cleaves 1-Phe-|-Val-2, 4-Gln-|-His-5, 13-Glu-|-Ala-14, 14-Ala-|-Leu-15, 15-Leu-|-Tyr-16, 16-Tyr-|-Leu-17, 23-Gly-|-Phe-24, 24-Phe-|-Phe-25 and 25-Phe-|-Tyr-26 bonds in the B chain of insulin.. Its function is as follows. Shows particularly broad specificity; although bonds involving phenylalanine and leucine are preferred, many others are also cleaved to some extent. This Macaca mulatta (Rhesus macaque) protein is Pepsin A (PGA).